The sequence spans 1662 residues: Cortactin-binding protein 2 (1662 aa).

Disordered regions lie at residues 1–23 (MATD…AGAA), 203–222 (KKKT…RSTE), 361–440 (SHSD…LHPG), 454–479 (GNAN…PTSR), and 498–618 (RFTS…PSID). Residues 119–276 (KKMQERMSAQ…EQLKRGSDSK (158 aa)) adopt a coiled-coil conformation. Residues 386–396 (PSTDSTPDPTS) show a composition bias toward low complexity. Residues 411-422 (QTPGIAPQNSQA) show a composition bias toward polar residues. R498 is subject to Asymmetric dimethylarginine. Polar residues predominate over residues 583-597 (TVASPPSSLPQGNRV). ANK repeat units lie at residues 709-739 (GRPT…DINY), 743-772 (DGHS…QINA), 776-805 (NGFT…NINH), 809-838 (GGQT…NRSV), 842-871 (DGWT…PACG), and 912-942 (EGWT…EPER). Residues 1450 to 1474 (GESGAWRKVNTSPRRKSGRFSLPTW) form a disordered region. Phosphoserine is present on S1524. Disordered stretches follow at residues 1580 to 1602 (SQKE…KSKT) and 1618 to 1662 (SKVT…KPNK). A compositionally biased stretch (polar residues) spans 1582–1599 (KEVSPLSSHQTTECSNSK). Residues 1624–1638 (SQNTKRSSSSSNTRQ) are compositionally biased toward low complexity. A compositionally biased stretch (polar residues) spans 1639–1648 (IEINNNSKEN). Positions 1649 to 1662 (WNLHKNEHLDKPNK) are enriched in basic and acidic residues.

Interacts with CTTN/cortactin SH3 domain. Interacts with STRN, STRN4/zinedin and MOB4/phocein; this interactions mediate the association with the STRIPAK core complex and may regulate dendritic spine distribution of the STRIPAK complex in hippocampal neurons. Activation of glutamate receptors weakens the interaction with STRN and STRN4.

The protein localises to the cytoplasm. The protein resides in the cell cortex. It localises to the cell projection. It is found in the dendritic spine. Functionally, regulates the dendritic spine distribution of CTTN/cortactin in hippocampal neurons, and thus controls dendritic spinogenesis and dendritic spine maintenance. Associates with the striatin-interacting phosphatase and kinase (STRIPAK) core complex to regulate dendritic spine distribution of the STRIPAK complex in hippocampal neurons. This Chlorocebus aethiops (Green monkey) protein is Cortactin-binding protein 2 (CTTNBP2).